The following is a 146-amino-acid chain: Zinc metalloproteinase-disintegrin salmosin-3 (146 aa).

Residues 1–57 enclose the Peptidase M12B domain; the sequence is SCPCDANSCIMSATLSNEPSSRFSDCSFSLPSRFSDCSFNQYSSDIIHYHECLLNEP. 9 disulfide bridges follow: cysteine 2/cysteine 37, cysteine 4/cysteine 9, cysteine 68/cysteine 87, cysteine 79/cysteine 97, cysteine 81/cysteine 92, cysteine 91/cysteine 114, cysteine 105/cysteine 111, cysteine 110/cysteine 135, and cysteine 123/cysteine 142. The region spanning 65–146 is the Disintegrin domain; it reads PPVCGNYYPE…GQSGVCPRNT (82 aa). The Cell attachment site motif lies at 127–129; that stretch reads RGD.

Belongs to the venom metalloproteinase (M12B) family. P-II subfamily. P-IIb sub-subfamily. Monomer (disintegrin). It depends on Zn(2+) as a cofactor. As to expression, expressed by the venom gland.

It localises to the secreted. Snake venom zinc metalloproteinase that inhibits ADP-induced platelet aggregation (probably by binding integrin alpha-IIb/beta-3 (ITGA2B/ITGB3)) and degrades fibrinogen. This chain is Zinc metalloproteinase-disintegrin salmosin-3, found in Gloydius brevicauda (Korean slamosa snake).